The sequence spans 207 residues: MTKLSKRQQMIFDFIKSEVKLKGYPPSVREIAVAVGLASSSTVHGHLERLENKGYIRRDPTKPRAIEIIDLEMEQQLPKDEARYAPVIGKVTAGIPITAVENIEEFVPIPSSSAGPDDNVFVLVIDGESMIEAGILDGDMVIVKQQNTAVNGEIVVAMTEENEATVKRFFKEENRIRLQPENATMEPLFYDNVTILGKVIGLYRNIH.

A DNA-binding region (H-T-H motif) is located at residues V28–E48. Active-site for autocatalytic cleavage activity residues include S129 and K167.

Belongs to the peptidase S24 family. In terms of assembly, homodimer.

The enzyme catalyses Hydrolysis of Ala-|-Gly bond in repressor LexA.. In terms of biological role, represses a number of genes involved in the response to DNA damage (SOS response), including recA and lexA. In the presence of single-stranded DNA, RecA interacts with LexA causing an autocatalytic cleavage which disrupts the DNA-binding part of LexA, leading to derepression of the SOS regulon and eventually DNA repair. The chain is LexA repressor from Oceanobacillus iheyensis (strain DSM 14371 / CIP 107618 / JCM 11309 / KCTC 3954 / HTE831).